A 374-amino-acid polypeptide reads, in one-letter code: Chaperone protein DnaJ (374 aa).

The region spanning 5–70 (DFYEILGVSK…EKRSAYDRMG (66 aa)) is the J domain. The CR-type zinc-finger motif lies at 133–211 (GCKKEISFTA…CHGNGVKDKS (79 aa)). Residues C146, C149, C163, C166, C185, C188, C199, and C202 each coordinate Zn(2+). CXXCXGXG motif repeat units lie at residues 146-153 (CDTCDGKG), 163-170 (CQTCHGQG), 185-192 (CPHCGGTG), and 199-206 (CSDCHGNG).

It belongs to the DnaJ family. Homodimer. The cofactor is Zn(2+).

Its subcellular location is the cytoplasm. Its function is as follows. Participates actively in the response to hyperosmotic and heat shock by preventing the aggregation of stress-denatured proteins and by disaggregating proteins, also in an autonomous, DnaK-independent fashion. Unfolded proteins bind initially to DnaJ; upon interaction with the DnaJ-bound protein, DnaK hydrolyzes its bound ATP, resulting in the formation of a stable complex. GrpE releases ADP from DnaK; ATP binding to DnaK triggers the release of the substrate protein, thus completing the reaction cycle. Several rounds of ATP-dependent interactions between DnaJ, DnaK and GrpE are required for fully efficient folding. Also involved, together with DnaK and GrpE, in the DNA replication of plasmids through activation of initiation proteins. The sequence is that of Chaperone protein DnaJ from Psychrobacter arcticus (strain DSM 17307 / VKM B-2377 / 273-4).